Here is an 89-residue protein sequence, read N- to C-terminus: Small ribosomal subunit protein uS15 (89 aa).

This sequence belongs to the universal ribosomal protein uS15 family. In terms of assembly, part of the 30S ribosomal subunit. Forms a bridge to the 50S subunit in the 70S ribosome, contacting the 23S rRNA.

Its function is as follows. One of the primary rRNA binding proteins, it binds directly to 16S rRNA where it helps nucleate assembly of the platform of the 30S subunit by binding and bridging several RNA helices of the 16S rRNA. Functionally, forms an intersubunit bridge (bridge B4) with the 23S rRNA of the 50S subunit in the ribosome. The polypeptide is Small ribosomal subunit protein uS15 (Treponema denticola (strain ATCC 35405 / DSM 14222 / CIP 103919 / JCM 8153 / KCTC 15104)).